Reading from the N-terminus, the 181-residue chain is TATA-box-binding protein (181 aa).

Tandem repeats lie at residues 8-84 (IENI…VDLM) and 99-175 (IQNI…YDRL).

This sequence belongs to the TBP family.

Functionally, general factor that plays a role in the activation of archaeal genes transcribed by RNA polymerase. Binds specifically to the TATA box promoter element which lies close to the position of transcription initiation. In Methanobrevibacter smithii (strain ATCC 35061 / DSM 861 / OCM 144 / PS), this protein is TATA-box-binding protein.